The primary structure comprises 225 residues: Peptidyl-tRNA hydrolase (225 aa).

Y27 contributes to the tRNA binding site. Residue H32 is the Proton acceptor of the active site. TRNA is bound by residues Y78, N80, and N126. The interval 198–225 (FNPLDFSGPDRQDQPAPLNPAKTAPGES) is disordered.

It belongs to the PTH family. As to quaternary structure, monomer.

The protein localises to the cytoplasm. The catalysed reaction is an N-acyl-L-alpha-aminoacyl-tRNA + H2O = an N-acyl-L-amino acid + a tRNA + H(+). Its function is as follows. Hydrolyzes ribosome-free peptidyl-tRNAs (with 1 or more amino acids incorporated), which drop off the ribosome during protein synthesis, or as a result of ribosome stalling. In terms of biological role, catalyzes the release of premature peptidyl moieties from peptidyl-tRNA molecules trapped in stalled 50S ribosomal subunits, and thus maintains levels of free tRNAs and 50S ribosomes. This is Peptidyl-tRNA hydrolase from Synechococcus sp. (strain JA-3-3Ab) (Cyanobacteria bacterium Yellowstone A-Prime).